Consider the following 776-residue polypeptide: Homoaconitase, mitochondrial (776 aa).

The N-terminal 38 residues, 1–38, are a transit peptide targeting the mitochondrion; sequence MQSRLVSQSGLGRRWAVLRCALSKTYQRRTLTSTRRQF. 3 residues coordinate [4Fe-4S] cluster: C394, C463, and C466.

It belongs to the aconitase/IPM isomerase family. It depends on [4Fe-4S] cluster as a cofactor.

Its subcellular location is the mitochondrion. It catalyses the reaction (2R,3S)-homoisocitrate = cis-homoaconitate + H2O. It participates in amino-acid biosynthesis; L-lysine biosynthesis via AAA pathway; L-alpha-aminoadipate from 2-oxoglutarate: step 3/5. In terms of biological role, catalyzes the reversible hydration of cis-homoaconitate to (2R,3S)-homoisocitrate, a step in the alpha-aminoadipate pathway for lysine biosynthesis. In Emericella nidulans (strain FGSC A4 / ATCC 38163 / CBS 112.46 / NRRL 194 / M139) (Aspergillus nidulans), this protein is Homoaconitase, mitochondrial (lys4).